The following is a 478-amino-acid chain: Endoglucanase 18 (478 aa).

Positions 1–21 (MGKLLVVMLIGMFLAFESLEA) are cleaved as a signal peptide. Asn29 carries an N-linked (GlcNAc...) asparagine glycan. The active-site Nucleophile is Asp76. Residue His398 is part of the active site. Positions 433 to 452 (HTGAIVGGPNSSDQYSDKRT) are disordered. N-linked (GlcNAc...) asparagine glycosylation is present at Asn442. Catalysis depends on residues Asp449 and Glu458.

This sequence belongs to the glycosyl hydrolase 9 (cellulase E) family.

It localises to the secreted. The catalysed reaction is Endohydrolysis of (1-&gt;4)-beta-D-glucosidic linkages in cellulose, lichenin and cereal beta-D-glucans.. This is Endoglucanase 18 from Arabidopsis thaliana (Mouse-ear cress).